Reading from the N-terminus, the 294-residue chain is GTP cyclohydrolase FolE2 (294 aa).

This sequence belongs to the GTP cyclohydrolase IV family.

The enzyme catalyses GTP + H2O = 7,8-dihydroneopterin 3'-triphosphate + formate + H(+). Its pathway is cofactor biosynthesis; 7,8-dihydroneopterin triphosphate biosynthesis; 7,8-dihydroneopterin triphosphate from GTP: step 1/1. In terms of biological role, converts GTP to 7,8-dihydroneopterin triphosphate. The protein is GTP cyclohydrolase FolE2 of Acinetobacter baylyi (strain ATCC 33305 / BD413 / ADP1).